The primary structure comprises 152 residues: Ribosome maturation factor RimP (152 aa).

Belongs to the RimP family.

It localises to the cytoplasm. Functionally, required for maturation of 30S ribosomal subunits. The protein is Ribosome maturation factor RimP of Ectopseudomonas mendocina (strain ymp) (Pseudomonas mendocina).